A 261-amino-acid chain; its full sequence is UPF0246 protein AZOSEA34360 (261 aa).

It belongs to the UPF0246 family.

The sequence is that of UPF0246 protein AZOSEA34360 from Aromatoleum aromaticum (strain DSM 19018 / LMG 30748 / EbN1) (Azoarcus sp. (strain EbN1)).